The chain runs to 177 residues: Alkyl hydroperoxide reductase AhpD (177 aa).

Cys131 (proton donor) is an active-site residue. Cys131 and Cys134 form a disulfide bridge. Cys134 functions as the Cysteine sulfenic acid (-SOH) intermediate in the catalytic mechanism.

Belongs to the AhpD family. In terms of assembly, homotrimer.

It catalyses the reaction N(6)-[(R)-dihydrolipoyl]-L-lysyl-[lipoyl-carrier protein] + a hydroperoxide = N(6)-[(R)-lipoyl]-L-lysyl-[lipoyl-carrier protein] + an alcohol + H2O. Antioxidant protein with alkyl hydroperoxidase activity. Required for the reduction of the AhpC active site cysteine residues and for the regeneration of the AhpC enzyme activity. This Streptomyces griseus subsp. griseus (strain JCM 4626 / CBS 651.72 / NBRC 13350 / KCC S-0626 / ISP 5235) protein is Alkyl hydroperoxide reductase AhpD.